The primary structure comprises 23 residues: Laccase-1 (23 aa).

The protein belongs to the multicopper oxidase family. Cu cation is required as a cofactor.

Its subcellular location is the secreted. The enzyme catalyses 4 hydroquinone + O2 = 4 benzosemiquinone + 2 H2O. Its activity is regulated as follows. Strongly inhibited by sodium azide, sodium cyanide, Li(+), Sn(+), Hg(2+), and the disulfide-reducing agents beta-mercaptoethanol, dithiothreitol and thioglycolic acid. Moderately inhibited by Mn(2+) and Fe(2+), inhibition by these metal ions is stronger at 0.1 mM than at 1 mM. Moderately inhibited by Cu(2+). Functionally, lignin degradation and detoxification of lignin-derived products. Demethylates eucalyptus hard wood lignin. Has high activity against the non-phenolic heterocyclic compound ABTS, and lower activity against the phenolic substrates syringic acid, caffeic acid, syringaldazine, vanillic acid, catechol and levodihydroxyphenylalanine. The polypeptide is Laccase-1 (Galerina sp).